Here is a 261-residue protein sequence, read N- to C-terminus: Homeobox protein engrailed-2b (261 aa).

3 stretches are compositionally biased toward basic and acidic residues: residues Met1–Asn21, Gly53–Arg72, and Lys100–Thr116. Disordered regions lie at residues Met1–Ile24, Gly53–Ser125, and Asp152–Arg176. The homeobox DNA-binding region spans Asp172 to Thr231.

Belongs to the engrailed homeobox family.

The protein localises to the nucleus. This is Homeobox protein engrailed-2b (eng2b) from Danio rerio (Zebrafish).